Reading from the N-terminus, the 176-residue chain is Ribosome maturation factor RimP (176 aa).

The protein belongs to the RimP family.

Its subcellular location is the cytoplasm. In terms of biological role, required for maturation of 30S ribosomal subunits. This is Ribosome maturation factor RimP from Mycolicibacterium vanbaalenii (strain DSM 7251 / JCM 13017 / BCRC 16820 / KCTC 9966 / NRRL B-24157 / PYR-1) (Mycobacterium vanbaalenii).